The following is a 454-amino-acid chain: (Z)-3-hexen-1-ol acetyltransferase (454 aa).

Catalysis depends on proton acceptor residues histidine 174 and aspartate 389.

The protein belongs to the plant acyltransferase family. In terms of tissue distribution, expressed in leaves and stems. Lower levels in flowers and barely detected in roots and siliques.

It catalyses the reaction (3Z)-hex-3-en-1-ol + acetyl-CoA = (3Z)-hex-3-en-1-yl acetate + CoA. Inhibited by magnesium, calcium, cobalt, zinc and copper. Acyltransferase involved in the production of green leaf volatiles (GLVs). Uses acetyl-CoA as substrate, but not malonyl-CoA or benzoyl-CoA. Prefers primary, medium-chain-length, aliphatic alcohols. The protein is (Z)-3-hexen-1-ol acetyltransferase (CHAT) of Arabidopsis thaliana (Mouse-ear cress).